We begin with the raw amino-acid sequence, 863 residues long: Potassium/sodium hyperpolarization-activated cyclic nucleotide-gated channel 2 (863 aa).

Over residues methionine 1 to proline 10 the composition is skewed to gly residues. Positions methionine 1–serine 131 are disordered. Residues methionine 1–aspartate 188 are Cytoplasmic-facing. A compositionally biased stretch (pro residues) spans threonine 17–proline 47. The span at glycine 106 to proline 128 shows a compositional bias: low complexity. A phosphoserine mark is found at serine 119 and serine 134. Residues serine 131–aspartate 182 are involved in subunit assembly. The chain crosses the membrane as a helical span at residues phenylalanine 189 to phenylalanine 209. Residues lysine 210–threonine 213 are Extracellular-facing. A helical transmembrane segment spans residues threonine 214 to leucine 234. The Cytoplasmic segment spans residues asparagine 235 to arginine 261. Residues threonine 262 to glutamate 282 traverse the membrane as a helical segment. Topologically, residues lysine 283 to tyrosine 290 are extracellular. A helical; Voltage-sensor transmembrane segment spans residues lysine 291 to leucine 311. At arginine 312–asparagine 342 the chain is on the cytoplasmic side. The helical transmembrane segment at leucine 343–methionine 363 threads the bilayer. Residues leucine 364–leucine 386 lie on the Extracellular side of the membrane. Asparagine 380 carries an N-linked (GlcNAc...) asparagine glycan. The segment at residues tyrosine 387–proline 408 is an intramembrane region (pore-forming). Topologically, residues glutamate 409–aspartate 413 are extracellular. The chain crosses the membrane as a helical span at residues isoleucine 414–histidine 434. At alanine 435–leucine 863 the chain is on the cytoplasmic side. Positions 581, 582, 584, 591, 592, and 632 each coordinate 3',5'-cyclic AMP. Serine 641 is subject to Phosphoserine; by PKG/PRKG2. Serine 726 carries the post-translational modification Phosphoserine. Position 728 is an omega-N-methylarginine (arginine 728). A disordered region spans residues valine 730–leucine 863. A compositionally biased stretch (pro residues) spans proline 734–proline 755. Phosphoserine occurs at positions 743, 750, and 757. Composition is skewed to low complexity over residues serine 756–proline 765, proline 778–proline 800, and proline 808–serine 834. Serine 840, serine 842, and serine 847 each carry phosphoserine.

The protein belongs to the potassium channel HCN family. As to quaternary structure, homotetramer. The channel is composed of a homo- or heterotetrameric complex of pore-forming subunits. Heterotetramer with HCN1. Forms an obligate 4:4 complex with accessory subunit PEX5L; regulates HCN2 cell-surface expression and cyclic nucleotide dependence. Interacts with KCNE2. Post-translationally, S-palmitoylated. In terms of processing, N-glycosylated; required for cell surface trafficking of HCN2. Phosphorylation at Ser-641 by PRKG2 shifts the voltage-dependence to more negative voltages, hence counteracting the stimulatory effect of cGMP on gating. As to expression, highly expressed in brain. Detected at low levels in heart, in ventricle, atrium and in sinoatrial node (SAN).

It localises to the cell membrane. It catalyses the reaction Na(+)(in) = Na(+)(out). The enzyme catalyses K(+)(in) = K(+)(out). The catalysed reaction is NH4(+)(in) = NH4(+)(out). With respect to regulation, activated by cAMP, and at 10-100 times higher concentrations, also by cGMP. cAMP binding causes a conformation change that leads to the assembly of an active tetramer and channel opening. In the absence of cAMP, the C-terminal region is thought to exert a tonic inhibition on the pore when HCN2 is in a non-tetrameric form. Channel activity is modulated by intracellular chloride ions and pH; acidic pH shifts the activation to more negative voltages. Phosphatidylinositol-4,5- bisphosphate (PIP(2)) acts as a ligand that allosterically opens HCN2 by shifting voltage-dependent channel activation toward depolarized potentials. Inhibited by extracellular cesium ions. Hyperpolarization-activated ion channel exhibiting weak selectivity for potassium over sodium ions. Contributes to the native pacemaker currents in heart (If) and in neurons (Ih). Can also transport ammonium in the distal nephron. Involved in the initiation of neuropathic pain in sensory neurons. This Mus musculus (Mouse) protein is Potassium/sodium hyperpolarization-activated cyclic nucleotide-gated channel 2.